Here is a 218-residue protein sequence, read N- to C-terminus: 3,4-dihydroxy-2-butanone 4-phosphate synthase (218 aa).

D-ribulose 5-phosphate-binding positions include 38-39 (RE), D43, 151-155 (RRGHT), and E175. A Mg(2+)-binding site is contributed by E39. Residues 125–151 (PHAKPEDLARPGHVFPLRARPGGVMTR) are disordered. H154 contributes to the Mg(2+) binding site.

This sequence belongs to the DHBP synthase family. Homodimer. Mg(2+) is required as a cofactor. Requires Mn(2+) as cofactor.

It catalyses the reaction D-ribulose 5-phosphate = (2S)-2-hydroxy-3-oxobutyl phosphate + formate + H(+). Its pathway is cofactor biosynthesis; riboflavin biosynthesis; 2-hydroxy-3-oxobutyl phosphate from D-ribulose 5-phosphate: step 1/1. Functionally, catalyzes the conversion of D-ribulose 5-phosphate to formate and 3,4-dihydroxy-2-butanone 4-phosphate. The protein is 3,4-dihydroxy-2-butanone 4-phosphate synthase of Vibrio parahaemolyticus serotype O3:K6 (strain RIMD 2210633).